Reading from the N-terminus, the 279-residue chain is uncharacterized protein (279 aa).

It belongs to the PhzF family.

This is an uncharacterized protein from Vibrio cholerae serotype O1 (strain ATCC 39315 / El Tor Inaba N16961).